Consider the following 548-residue polypeptide: Chaperonin GroEL (548 aa).

ATP contacts are provided by residues 30-33 (TLGP), Lys51, 87-91 (DGTTT), Gly415, and Asp496.

The protein belongs to the chaperonin (HSP60) family. Forms a cylinder of 14 subunits composed of two heptameric rings stacked back-to-back. Interacts with the co-chaperonin GroES.

Its subcellular location is the cytoplasm. The enzyme catalyses ATP + H2O + a folded polypeptide = ADP + phosphate + an unfolded polypeptide.. Functionally, together with its co-chaperonin GroES, plays an essential role in assisting protein folding. The GroEL-GroES system forms a nano-cage that allows encapsulation of the non-native substrate proteins and provides a physical environment optimized to promote and accelerate protein folding. The protein is Chaperonin GroEL of Haemophilus influenzae (strain ATCC 51907 / DSM 11121 / KW20 / Rd).